The sequence spans 100 residues: Large ribosomal subunit protein eL21 (100 aa).

A disordered region spans residues 1–21; that stretch reads MVKRTHGYRYKSRKLLRKKPR.

This sequence belongs to the eukaryotic ribosomal protein eL21 family.

The chain is Large ribosomal subunit protein eL21 from Pyrobaculum islandicum (strain DSM 4184 / JCM 9189 / GEO3).